We begin with the raw amino-acid sequence, 387 residues long: 3-ketoacyl-CoA thiolase (387 aa).

The Acyl-thioester intermediate role is filled by Cys-91. Residues His-343 and Cys-373 each act as proton acceptor in the active site.

The protein belongs to the thiolase-like superfamily. Thiolase family. As to quaternary structure, heterotetramer of two alpha chains (FadB) and two beta chains (FadA).

The protein resides in the cytoplasm. The catalysed reaction is an acyl-CoA + acetyl-CoA = a 3-oxoacyl-CoA + CoA. The protein operates within lipid metabolism; fatty acid beta-oxidation. Catalyzes the final step of fatty acid oxidation in which acetyl-CoA is released and the CoA ester of a fatty acid two carbons shorter is formed. The polypeptide is 3-ketoacyl-CoA thiolase (Shewanella denitrificans (strain OS217 / ATCC BAA-1090 / DSM 15013)).